Here is a 758-residue protein sequence, read N- to C-terminus: POU domain, class 2, transcription factor 1 (758 aa).

Composition is skewed to polar residues over residues Met-1 to Gln-10, Arg-19 to Pro-30, and Val-275 to Pro-285. Disordered regions lie at residues Met-1–Gly-43, Ala-271–Pro-296, Thr-377–Lys-398, Glu-450–Ser-472, and Ser-534–Ser-573. In terms of domain architecture, POU-specific spans Glu-294 to Glu-368. Residues Arg-395–Asn-454 constitute a DNA-binding region (homeobox). Low complexity predominate over residues Pro-455 to Ser-472.

It belongs to the POU transcription factor family. Class-2 subfamily. Expressed in oocytes (at protein level). Expressed in the tadpole brain (at protein level).

The protein resides in the cytoplasm. It is found in the nucleus. Transcription factor that binds to the octamer motif (5'-ATTTGCAT-3') and activates the promoters of the genes of some small nuclear RNAs (snRNA) and histone H2B. In vitro does not bind to variant octamer sequences, such as the H2B octamer 5'-GTTTGCAT-3', although binding has been observed in vivo during early embryogenesis, suggesting that interactions between pou2f1 and other factors might be required for octamer-dependent H2B transcription. Acts downstream of Notch signaling during radial glia formation. May be important for gastrulation, possibly through the regulation of an FGF-type signaling pathway. The chain is POU domain, class 2, transcription factor 1 (pou2f1) from Xenopus laevis (African clawed frog).